The primary structure comprises 117 residues: UPF0342 protein LEUM_1212 (117 aa).

The protein belongs to the UPF0342 family.

The chain is UPF0342 protein LEUM_1212 from Leuconostoc mesenteroides subsp. mesenteroides (strain ATCC 8293 / DSM 20343 / BCRC 11652 / CCM 1803 / JCM 6124 / NCDO 523 / NBRC 100496 / NCIMB 8023 / NCTC 12954 / NRRL B-1118 / 37Y).